A 101-amino-acid chain; its full sequence is C-X-C motif chemokine 3 (101 aa).

A signal peptide spans 1–32; sequence MAPPTRRLLNAALLLLLLLMATSHQPSGTVVA. 2 cysteine pairs are disulfide-bonded: Cys37–Cys63 and Cys39–Cys79.

It belongs to the intercrine alpha (chemokine CxC) family.

The protein localises to the secreted. Ligand for CXCR2. Has chemotactic activity for neutrophils. May play a role in inflammation and exert its effects on endothelial cells in an autocrine fashion. The polypeptide is C-X-C motif chemokine 3 (Cxcl3) (Rattus norvegicus (Rat)).